Reading from the N-terminus, the 435-residue chain is MENVCFQQRLRDLETRVRKWKFLKLGLTEVRLRPRDRRSTSVDQKHKECSSTSSSPQHQRPNNIGYLTSPMERKFTPLSMKPSPSRRDTEKDALEYEFLEGYKKSGTLEIDGEKQVVDPNEIHIISLLGSGSCGVVESATVRSKLMAVKTMYKNDNKENLKRILRDVRIMSMCNSPFIVTSYGYFMFDSSVKICMQIMSACCEKLLRRIYHSKLDFFPEFVAGHIVYSAISALDYLKEKHSIIHRDIKPSNILFDDSGNVKLCDFGISGFMTDSMAHSKSAGCPPYMAPERLTIETNSKYDVRSDVWSLGITVYQLVTGLYPFPLNDMEFTTLTIIANLNLPSPSLREETKRSFSPLFIEFLDLCLRKDVRERPEYRQLMKHDFYLDYDPASGSAYKFKAINGKCNQVADWFVDVIRLSKTEDELKSIPNTPCVN.

Residues 35–49 are compositionally biased toward basic and acidic residues; that stretch reads RDRRSTSVDQKHKEC. The segment at 35-90 is disordered; the sequence is RDRRSTSVDQKHKECSSTSSSPQHQRPNNIGYLTSPMERKFTPLSMKPSPSRRDTE. The segment covering 50 to 66 has biased composition (polar residues); sequence SSTSSSPQHQRPNNIGY. In terms of domain architecture, Protein kinase spans 122-385; that stretch reads IHIISLLGSG…YRQLMKHDFY (264 aa). ATP contacts are provided by residues 128–136 and Lys149; that span reads LGSGSCGVV. Residue Asp246 is the Proton acceptor of the active site.

Belongs to the protein kinase superfamily. STE Ser/Thr protein kinase family. MAP kinase kinase subfamily. Interacts with unc-16. The cofactor is Mg(2+). Expressed in most neurons, including nerve ring, head ganglions, dorsal and ventral nerve cords and tail ganglions.

The protein resides in the cytoplasm. It is found in the perikaryon. Its subcellular location is the cell projection. It localises to the axon. It carries out the reaction L-seryl-[protein] + ATP = O-phospho-L-seryl-[protein] + ADP + H(+). It catalyses the reaction L-threonyl-[protein] + ATP = O-phospho-L-threonyl-[protein] + ADP + H(+). The catalysed reaction is L-tyrosyl-[protein] + ATP = O-phospho-L-tyrosyl-[protein] + ADP + H(+). In terms of biological role, dual specificity protein kinase which acts as an essential component of the JNK signal transduction pathway. May phosphorylate jnk-1. Plays a role in coordinating locomotion via D-type GABAergic motoneurons and in regulating synaptic vesicle transport downstream of adapter protein unc-16 and probably by activating jnk-1. Positively regulates lifespan. Upon environmental stress such as heat stress regulates daf-16 nuclear translocation probably by activating jnk-1. Regulates germline cell apoptosis in response to heavy metals such as Cu(2+) and to arsenite. The chain is Dual specificity mitogen-activated protein kinase kinase jkk-1 from Caenorhabditis elegans.